The primary structure comprises 422 residues: Exopolygalacturonase clone GBGE184 (422 aa).

The N-terminal stretch at 1-31 (MANARSLVAKANNINVGSLILMALVFGSCVA) is a signal peptide. PbH1 repeat units lie at residues 200 to 226 (TENV…HLSN), 227 to 248 (ADNV…SVGR), 250 to 270 (SNNV…SVGS), 280 to 301 (VSGI…RIKT), and 310 to 331 (AVDI…IIDQ). N-linked (GlcNAc...) asparagine glycosylation is present at asparagine 229. Catalysis depends on aspartate 241, which acts as the Proton donor. Cysteine 243 and cysteine 260 are disulfide-bonded. Asparagine 252 is a glycosylation site (N-linked (GlcNAc...) asparagine). Histidine 264 is an active-site residue. Residue asparagine 287 is glycosylated (N-linked (GlcNAc...) asparagine). Cystine bridges form between cysteine 366-cysteine 372 and cysteine 404-cysteine 420.

It belongs to the glycosyl hydrolase 28 family.

The protein localises to the secreted. It localises to the cell wall. The catalysed reaction is [(1-&gt;4)-alpha-D-galacturonosyl](n) + H2O = alpha-D-galacturonate + [(1-&gt;4)-alpha-D-galacturonosyl](n-1). Functionally, may function in depolymerizing pectin during pollen development, germination, and tube growth. Acts as an exo-polygalacturonase. The chain is Exopolygalacturonase clone GBGE184 (PGA3) from Arabidopsis thaliana (Mouse-ear cress).